Reading from the N-terminus, the 1072-residue chain is MLRDGNEGMSTIPGFSQIQFEGFCRFVDQGLAEELHKFPKIEDTDQEIEFQLLVETYQLAEPLIKERDAVYESLTHSSELYVPAGLIWKVGRDMQEQTVFIGNIPLMNSLGTFIVNGIYRIVINQILQSPGIYYSSELDHNGISVYTGTIISDRGGRSELEIDRKARIWARVSRKQKISILVLPSAMGSNLREILDNVCYPEILLYFPNEKEKKKIGSKENAILEFYQQFSCVGGDPVFSESLCKELQKRFFQQRCELGRIGRQNMNQRLNIDIPQNNTFLLPRDVLAATDHLIGMKFGMGTLDDMNHLKNKRIRSVADLLQDQFGLALVRLENVVRGTICGAIRHKFIPTPQNLVTSTPLTTTYESFFGLHPLSQVLDRTNPLTQIVHGRKSSYLGPGGLTGRTASFRIRDIHPSHYGRICPIDTSEGINVGLIGSLAIHARIGDWGSIRSPFYEISERSKEEQMVYLSPRRDEYYMVMVAAGNSLALNQDIQDEQVVPARYRQEFVTIAWEHIDLRSIYPLQYFSIGASLIPFIEHNDANRALMSSNMQRQAVPLSRSEKCIVGTGLERQAALDSGGSAIAQHEGKVIYTDTEKILLSGNGDTISIPLLMYQRSNKNTCMHQKPQVHRDKYVKKGQVLADGAATVGGELALGKNVLVAHMPWEGYNFEDAVLISERLVYGDIYTSFHIRKYEIQTHVTSHGPEKITNEIPHLEAHLLRNLDRNGIVMLGSWVETGDVLVGKLTPQTAKESSYAPEDRLLRVILGIQVSTAKETCLKLPIGGRGRVIDVRWIQKKGASSYNPEKIRVYISQKREIKVGDKVAGRHGNKGIISKILPRQDMPYLQDGTPVDMVFNPLGVPSRMNVGQIFECSLGLAGDLLDRHYRITPFDERYEQEASRKLVFPELYEASKRTANPWVFEPEYPGKSRIFDGRTGDPFEQPVIIGKSYMLKLIHQVDDKIHGRSSGHYALVTQQPLRGRAKQGGQRVGEMEVWALEGFGVAHILQEMLTYKSDHIRARQELLGTTIVGGTIPKPEGAPESFRLLVRELRSLALELKHFLVSEKNFQINRKEA.

The protein belongs to the RNA polymerase beta chain family. In terms of assembly, in plastids the minimal PEP RNA polymerase catalytic core is composed of four subunits: alpha, beta, beta', and beta''. When a (nuclear-encoded) sigma factor is associated with the core the holoenzyme is formed, which can initiate transcription.

It localises to the plastid. The protein resides in the chloroplast. It carries out the reaction RNA(n) + a ribonucleoside 5'-triphosphate = RNA(n+1) + diphosphate. DNA-dependent RNA polymerase catalyzes the transcription of DNA into RNA using the four ribonucleoside triphosphates as substrates. This Amborella trichopoda protein is DNA-directed RNA polymerase subunit beta.